Consider the following 271-residue polypeptide: Imidazole glycerol phosphate synthase subunit HisF (271 aa).

Active-site residues include Asp12 and Asp136.

The protein belongs to the HisA/HisF family. In terms of assembly, heterodimer of HisH and HisF.

The protein resides in the cytoplasm. It carries out the reaction 5-[(5-phospho-1-deoxy-D-ribulos-1-ylimino)methylamino]-1-(5-phospho-beta-D-ribosyl)imidazole-4-carboxamide + L-glutamine = D-erythro-1-(imidazol-4-yl)glycerol 3-phosphate + 5-amino-1-(5-phospho-beta-D-ribosyl)imidazole-4-carboxamide + L-glutamate + H(+). Its pathway is amino-acid biosynthesis; L-histidine biosynthesis; L-histidine from 5-phospho-alpha-D-ribose 1-diphosphate: step 5/9. In terms of biological role, IGPS catalyzes the conversion of PRFAR and glutamine to IGP, AICAR and glutamate. The HisF subunit catalyzes the cyclization activity that produces IGP and AICAR from PRFAR using the ammonia provided by the HisH subunit. In Natronomonas pharaonis (strain ATCC 35678 / DSM 2160 / CIP 103997 / JCM 8858 / NBRC 14720 / NCIMB 2260 / Gabara) (Halobacterium pharaonis), this protein is Imidazole glycerol phosphate synthase subunit HisF.